A 298-amino-acid chain; its full sequence is Zinc finger protein-like 1 homolog (298 aa).

The segment at 1–43 adopts a B box-type; degenerate zinc-finger fold; that stretch reads MGLCKCPKRLVTNQFCFEHRVNVCEHCMVQSHPKCIVQSYLQW. An RING-type; atypical zinc finger spans residues 53–101; the sequence is CTLCGTTLEQGDCVRLVCYHVFHWDCLNARQAALPANTAPRGHQCPACT. Residues 199–230 are disordered; that stretch reads AGDYASSRRPLLPRQSPIGGTDRDDNKYQRRT. S214 carries the post-translational modification Phosphoserine. The chain crosses the membrane as a helical span at residues 255-275; sequence WFLVTAGILAFVLFVYLMAWL.

This sequence belongs to the ZFPL1 family.

Its subcellular location is the membrane. This Drosophila erecta (Fruit fly) protein is Zinc finger protein-like 1 homolog.